A 194-amino-acid polypeptide reads, in one-letter code: Early E3 22.1 kDa glycoprotein (194 aa).

N19, N60, N75, N87, N125, and N138 each carry an N-linked (GlcNAc...) asparagine; by host glycan.

The chain is Early E3 22.1 kDa glycoprotein from Canine adenovirus serotype 1 (strain RI261) (CAdV-1).